The following is a 217-amino-acid chain: Octanoyltransferase (217 aa).

Residues aspartate 35–arginine 214 form the BPL/LPL catalytic domain. Substrate is bound by residues arginine 73–histidine 80, alanine 145–glycine 147, and glycine 158–serine 160. Cysteine 176 functions as the Acyl-thioester intermediate in the catalytic mechanism.

Belongs to the LipB family.

The protein resides in the cytoplasm. The catalysed reaction is octanoyl-[ACP] + L-lysyl-[protein] = N(6)-octanoyl-L-lysyl-[protein] + holo-[ACP] + H(+). The protein operates within protein modification; protein lipoylation via endogenous pathway; protein N(6)-(lipoyl)lysine from octanoyl-[acyl-carrier-protein]: step 1/2. In terms of biological role, catalyzes the transfer of endogenously produced octanoic acid from octanoyl-acyl-carrier-protein onto the lipoyl domains of lipoate-dependent enzymes. Lipoyl-ACP can also act as a substrate although octanoyl-ACP is likely to be the physiological substrate. The protein is Octanoyltransferase of Sphingopyxis alaskensis (strain DSM 13593 / LMG 18877 / RB2256) (Sphingomonas alaskensis).